A 278-amino-acid polypeptide reads, in one-letter code: NAD-capped RNA hydrolase NudC (278 aa).

Arg84 is a substrate binding site. Zn(2+) is bound by residues Cys114 and Cys117. Glu127 lines the substrate pocket. Residues Cys132 and Cys135 each contribute to the Zn(2+) site. Residue Tyr140 participates in substrate binding. A Nudix hydrolase domain is found at 141–265 (PRLSPSMIVL…IARHLIDLYL (125 aa)). Positions 174, 190, and 194 each coordinate a divalent metal cation. The Nudix box motif lies at 175–196 (GFVEAGESVEQCVVREVREEVG). Substrate is bound at residue 208–215 (QNWPFPHS). Glu235 is an a divalent metal cation binding site. A substrate-binding site is contributed by Ala257.

The protein belongs to the Nudix hydrolase family. NudC subfamily. In terms of assembly, homodimer. Mg(2+) serves as cofactor. The cofactor is Mn(2+). It depends on Zn(2+) as a cofactor.

It catalyses the reaction a 5'-end NAD(+)-phospho-ribonucleoside in mRNA + H2O = a 5'-end phospho-adenosine-phospho-ribonucleoside in mRNA + beta-nicotinamide D-ribonucleotide + 2 H(+). The enzyme catalyses NAD(+) + H2O = beta-nicotinamide D-ribonucleotide + AMP + 2 H(+). The catalysed reaction is NADH + H2O = reduced beta-nicotinamide D-ribonucleotide + AMP + 2 H(+). In terms of biological role, mRNA decapping enzyme that specifically removes the nicotinamide adenine dinucleotide (NAD) cap from a subset of mRNAs by hydrolyzing the diphosphate linkage to produce nicotinamide mononucleotide (NMN) and 5' monophosphate mRNA. The NAD-cap is present at the 5'-end of some mRNAs and stabilizes RNA against 5'-processing. Has preference for mRNAs with a 5'-end purine. Catalyzes the hydrolysis of a broad range of dinucleotide pyrophosphates. The chain is NAD-capped RNA hydrolase NudC from Pseudomonas aeruginosa (strain LESB58).